A 2531-amino-acid chain; its full sequence is Probable polyketide synthase 26 (2531 aa).

One can recognise a Ketosynthase family 3 (KS3) domain in the interval 10–433 (QEDIAIIGFR…GSNCCLVLTE (424 aa)). Catalysis depends on for beta-ketoacyl synthase activity residues Cys-174, His-316, and His-356. The tract at residues 620–653 (GINPSFIVGHSLGELPMAFCSGMIDFDTVCYLLY) is acyl/malonyl transferase. The active-site For acyl/malonyl transferase activity is Ser-630. Residues 915 to 1036 (MDTLGFSNEK…ANYHLSHRDD (122 aa)) form an N-terminal hotdog fold region. Residues 915–1206 (MDTLGFSNEK…LKSLIPLKDP (292 aa)) enclose the PKS/mFAS DH domain. His-948 functions as the Proton acceptor; for dehydratase activity in the catalytic mechanism. Positions 1055–1206 (NLTKLSKNQF…LKSLIPLKDP (152 aa)) are C-terminal hotdog fold. The active-site Proton donor; for dehydratase activity is the Asp-1117. The region spanning 2431-2509 (ASENPVKDLL…DNIKILTDSY (79 aa)) is the Carrier domain. Residue Ser-2468 is modified to O-(pantetheine 4'-phosphoryl)serine.

Pantetheine 4'-phosphate is required as a cofactor.

In terms of biological role, probable polyketide synthase. This is Probable polyketide synthase 26 (pks26) from Dictyostelium discoideum (Social amoeba).